The sequence spans 477 residues: D(1B) dopamine receptor (477 aa).

The Extracellular portion of the chain corresponds to methionine 1–serine 39. Residue asparagine 7 is glycosylated (N-linked (GlcNAc...) asparagine). A helical transmembrane segment spans residues glutamine 40–valine 66. Residues arginine 67–asparagine 77 are Cytoplasmic-facing. A helical transmembrane segment spans residues valine 78 to alanine 104. Residues glycine 105–aspartate 114 are Extracellular-facing. Cysteine 113 and cysteine 217 are joined by a disulfide. The chain crosses the membrane as a helical span at residues valine 115–valine 136. The Cytoplasmic portion of the chain corresponds to aspartate 137 to leucine 158. A helical membrane pass occupies residues valine 159–tryptophan 180. Residues histidine 181–arginine 223 lie on the Extracellular side of the membrane. A glycan (N-linked (GlcNAc...) asparagine) is linked at asparagine 222. A helical membrane pass occupies residues threonine 224–threonine 246. At arginine 247–lysine 296 the chain is on the cytoplasmic side. Residues threonine 297–proline 320 form a helical membrane-spanning segment. Residues phenylalanine 321–threonine 340 are Extracellular-facing. A helical membrane pass occupies residues phenylalanine 341–alanine 360. At phenylalanine 361–histidine 477 the chain is on the cytoplasmic side. Cysteine 375 carries S-palmitoyl cysteine lipidation.

This sequence belongs to the G-protein coupled receptor 1 family. In terms of tissue distribution, neuron-specific, localized primarily within limbic regions of the brain.

The protein localises to the cell membrane. In terms of biological role, dopamine receptor whose activity is mediated by G proteins which activate adenylyl cyclase. The polypeptide is D(1B) dopamine receptor (DRD5) (Homo sapiens (Human)).